The following is a 372-amino-acid chain: Ligninase C (372 aa).

An N-terminal signal peptide occupies residues 1-26 (MAFKSLLSFVSVIGALQGANAALTRR). The active-site Proton acceptor is histidine 74. The Ca(2+) site is built by aspartate 75, glycine 93, aspartate 95, and serine 97. Asparagine 129 carries an N-linked (GlcNAc...) asparagine glycan. Histidine 205 provides a ligand contact to heme b. Ca(2+) is bound by residues threonine 206, aspartate 223, threonine 225, leucine 228, and aspartate 230. Positions 346 to 372 (TPFPTFPTDPGPKTAVAPVPKPPAARK) are disordered.

This sequence belongs to the peroxidase family. Ligninase subfamily. Requires Ca(2+) as cofactor. The cofactor is heme b.

The catalysed reaction is 1-(3,4-dimethoxyphenyl)-2-(2-methoxyphenoxy)propane-1,3-diol + H2O2 = 3,4-dimethoxybenzaldehyde + guaiacol + glycolaldehyde + H2O. The enzyme catalyses 2 (3,4-dimethoxyphenyl)methanol + H2O2 = 2 (3,4-dimethoxyphenyl)methanol radical + 2 H2O. It participates in secondary metabolite metabolism; lignin degradation. Its function is as follows. Depolymerization of lignin. Catalyzes the C(alpha)-C(beta) cleavage of the propyl side chains of lignin. In Trametes versicolor (White-rot fungus), this protein is Ligninase C.